Reading from the N-terminus, the 134-residue chain is Small ribosomal subunit protein uS11 (134 aa).

Belongs to the universal ribosomal protein uS11 family. As to quaternary structure, part of the 30S ribosomal subunit. Interacts with proteins S7 and S18. Binds to IF-3.

In terms of biological role, located on the platform of the 30S subunit, it bridges several disparate RNA helices of the 16S rRNA. Forms part of the Shine-Dalgarno cleft in the 70S ribosome. In Variovorax paradoxus (strain S110), this protein is Small ribosomal subunit protein uS11.